The chain runs to 70 residues: DNA-directed RNA polymerase subunit omega (70 aa).

Belongs to the RNA polymerase subunit omega family. The RNAP catalytic core consists of 2 alpha, 1 beta, 1 beta' and 1 omega subunit. When a sigma factor is associated with the core the holoenzyme is formed, which can initiate transcription.

The enzyme catalyses RNA(n) + a ribonucleoside 5'-triphosphate = RNA(n+1) + diphosphate. Its function is as follows. Promotes RNA polymerase assembly. Latches the N- and C-terminal regions of the beta' subunit thereby facilitating its interaction with the beta and alpha subunits. The sequence is that of DNA-directed RNA polymerase subunit omega from Bacillus cereus (strain B4264).